A 209-amino-acid chain; its full sequence is Peptidyl-tRNA hydrolase (209 aa).

TRNA is bound at residue Tyr14. His19 serves as the catalytic Proton acceptor. TRNA-binding residues include Tyr68, Asn70, and Asn116.

This sequence belongs to the PTH family. As to quaternary structure, monomer.

The protein resides in the cytoplasm. The catalysed reaction is an N-acyl-L-alpha-aminoacyl-tRNA + H2O = an N-acyl-L-amino acid + a tRNA + H(+). Hydrolyzes ribosome-free peptidyl-tRNAs (with 1 or more amino acids incorporated), which drop off the ribosome during protein synthesis, or as a result of ribosome stalling. In terms of biological role, catalyzes the release of premature peptidyl moieties from peptidyl-tRNA molecules trapped in stalled 50S ribosomal subunits, and thus maintains levels of free tRNAs and 50S ribosomes. In Phenylobacterium zucineum (strain HLK1), this protein is Peptidyl-tRNA hydrolase.